A 574-amino-acid chain; its full sequence is ATP-grasp enzyme fsqD (574 aa).

An ATP-grasp domain is found at 234 to 462 (NKFLTSKYVG…YWGLAAVLGV (229 aa)). Position 263 to 318 (263 to 318 (ALPYPLIVKPCDGWSSEGVSRVESPDAFPAAVKSIDTSRHGTEFVMEPYCDGPEVD)) interacts with ATP. Residues Glu-394, Glu-431, and Asn-433 each coordinate Mg(2+). 3 residues coordinate Mn(2+): Glu-394, Glu-431, and Asn-433.

It depends on Mg(2+) as a cofactor. Requires Mn(2+) as cofactor.

It participates in secondary metabolite biosynthesis. In terms of biological role, ATP-grasp enzyme; part of the gene cluster that mediates the biosynthesis of the isoquinoline alkaloids fumisoquin A, fumisoquin B and fumisoquin C; as well as small amounts of fumipyrrole as a shunt metabolite. The products of the cluster lead to a brown coloration and are important for growth and conidiation. The nonribosomal peptide synthetase-like protein fsqF, which lacks a canonical condensation domain, is required for addition of a serine-derived dehydroalanine moiety to activated tyrosine but is not essential for the subsequent steps leading to isoquinoline formation. A different enzyme, most likely the ATP-grasp enzyme fsqD, is responsible for activation of tyrosine. Three additional enzymes encoded by the fsq cluster, the N-methyltransferase fsqC, the phenol 2-monooxygenase fsqG and the FAD-dependent oxidase fsqB, catalyze the formation of the isoquinoline ring system in the fumisoquins. FsqB converts the fspF thiolation domain-bound (2S,4S,5S)-2-amino-6-(3,4-dihydroxyphenyl)-4-hydroxy-5-(methylamino)hexanoyl into isoquinoline. The cyclization most likely proceeds via a two-step mechanism, beginning with FAD-dependent oxidation of the methyl group to an iminium species followed by electrophilic attack on the deprotonated phenol. This chain is ATP-grasp enzyme fsqD, found in Aspergillus fumigatus (strain ATCC MYA-4609 / CBS 101355 / FGSC A1100 / Af293) (Neosartorya fumigata).